A 245-amino-acid chain; its full sequence is Triosephosphate isomerase (245 aa).

A substrate-binding site is contributed by 9-11 (NWK). Catalysis depends on H92, which acts as the Electrophile. Catalysis depends on E164, which acts as the Proton acceptor. Substrate is bound by residues G170, S209, and 230–231 (GG).

This sequence belongs to the triosephosphate isomerase family. Homodimer.

The protein resides in the cytoplasm. It carries out the reaction D-glyceraldehyde 3-phosphate = dihydroxyacetone phosphate. Its pathway is carbohydrate biosynthesis; gluconeogenesis. It participates in carbohydrate degradation; glycolysis; D-glyceraldehyde 3-phosphate from glycerone phosphate: step 1/1. In terms of biological role, involved in the gluconeogenesis. Catalyzes stereospecifically the conversion of dihydroxyacetone phosphate (DHAP) to D-glyceraldehyde-3-phosphate (G3P). In Cupriavidus necator (strain ATCC 17699 / DSM 428 / KCTC 22496 / NCIMB 10442 / H16 / Stanier 337) (Ralstonia eutropha), this protein is Triosephosphate isomerase.